The sequence spans 206 residues: Flavin prenyltransferase UbiX (206 aa).

Residues 14–16 (GAS), Thr40, 101–104 (SMGT), and Arg136 contribute to the FMN site. Residues Tyr166 and Lys182 each coordinate dimethylallyl phosphate.

The protein belongs to the UbiX/PAD1 family.

The enzyme catalyses dimethylallyl phosphate + FMNH2 = prenylated FMNH2 + phosphate. Flavin prenyltransferase that catalyzes the synthesis of the prenylated FMN cofactor (prenyl-FMN) for 4-hydroxy-3-polyprenylbenzoic acid decarboxylase UbiD. The prenyltransferase is metal-independent and links a dimethylallyl moiety from dimethylallyl monophosphate (DMAP) to the flavin N5 and C6 atoms of FMN. This Halalkalibacterium halodurans (strain ATCC BAA-125 / DSM 18197 / FERM 7344 / JCM 9153 / C-125) (Bacillus halodurans) protein is Flavin prenyltransferase UbiX.